Reading from the N-terminus, the 130-residue chain is Small ribosomal subunit protein uS9 (130 aa).

The disordered stretch occupies residues 106 to 130 (RDSRKVERKKPGLKKARKASQFSKR). Positions 111-130 (VERKKPGLKKARKASQFSKR) are enriched in basic residues.

Belongs to the universal ribosomal protein uS9 family.

The polypeptide is Small ribosomal subunit protein uS9 (Streptococcus pneumoniae (strain ATCC 700669 / Spain 23F-1)).